A 282-amino-acid chain; its full sequence is Protein-export membrane protein SecF (282 aa).

6 helical membrane passes run 16 to 36, 126 to 146, 148 to 168, 169 to 189, 221 to 241, and 253 to 273; these read MVAL…FNTV, QAIW…FVAF, IFIP…ITAA, FMDV…LMLI, GIIM…VFSL, and VLII…AGLL.

Belongs to the SecD/SecF family. SecF subfamily. Part of the protein translocation apparatus. Forms a complex with SecD.

The protein localises to the cell membrane. Involved in protein export. This is Protein-export membrane protein SecF from Methanolacinia petrolearia (strain DSM 11571 / OCM 486 / SEBR 4847) (Methanoplanus petrolearius).